A 277-amino-acid polypeptide reads, in one-letter code: Probable endonuclease 4 (277 aa).

Positions 70, 108, 145, 178, 181, 212, 225, 227, and 257 each coordinate Zn(2+).

It belongs to the AP endonuclease 2 family. It depends on Zn(2+) as a cofactor.

It catalyses the reaction Endonucleolytic cleavage to 5'-phosphooligonucleotide end-products.. In terms of biological role, endonuclease IV plays a role in DNA repair. It cleaves phosphodiester bonds at apurinic or apyrimidinic (AP) sites, generating a 3'-hydroxyl group and a 5'-terminal sugar phosphate. The polypeptide is Probable endonuclease 4 (Mycoplasmopsis pulmonis (strain UAB CTIP) (Mycoplasma pulmonis)).